The following is a 422-amino-acid chain: Solanesyl diphosphate synthase 3, chloroplastic/mitochondrial (422 aa).

The N-terminal 32 residues, 1–32 (MLFTRSVARISSKFLRNRSFYGSSQSLASHRF), are a transit peptide targeting the chloroplast and mitochondrion. Isopentenyl diphosphate-binding residues include lysine 125, arginine 128, and histidine 174. Positions 181 and 185 each coordinate Mg(2+). Residue arginine 190 coordinates an all-trans-polyprenyl diphosphate. Residue arginine 191 coordinates isopentenyl diphosphate. Positions 267, 268, 305, and 322 each coordinate an all-trans-polyprenyl diphosphate.

Belongs to the FPP/GGPP synthase family. As to quaternary structure, homodimer. Requires Mg(2+) as cofactor. In terms of tissue distribution, ubiquitous. Highest expression in seeds and shoot apical meristem.

The protein resides in the plastid. Its subcellular location is the chloroplast. It localises to the mitochondrion. It catalyses the reaction 5 isopentenyl diphosphate + (2E,6E,10E)-geranylgeranyl diphosphate = all-trans-nonaprenyl diphosphate + 5 diphosphate. In terms of biological role, may be involved in the supply of solanesyl diphosphate for ubiquinone-9 (UQ-9) biosynthesis in mitochondria. Synthesizes C25 to C45 medium / long-chain products depending on the type of substrate available. Can use geranyl diphosphate, farnesyl diphosphate or geranylgeranyl diphosphate as substrates, but not dimethylallyl diphosphate. This Arabidopsis thaliana (Mouse-ear cress) protein is Solanesyl diphosphate synthase 3, chloroplastic/mitochondrial.